Consider the following 188-residue polypeptide: MAERANDIRPGQVLEHNGGLFLVVGIMHTQPGKGGAYIQAEMKNIKTGAKHYERFRSDATIRRAILDEEEYVYLFTEGNIVNLMHPSNYEQITINLDLLGEKKIYLQDNMKIKVVAYQDKIISAHVPDYVTLAVKETESVIKGQTATASYKPAILENGMRVNVPQFIKEEDKIVVYTPGDSYYERVKE.

This sequence belongs to the elongation factor P family.

It localises to the cytoplasm. It participates in protein biosynthesis; polypeptide chain elongation. Functionally, involved in peptide bond synthesis. Stimulates efficient translation and peptide-bond synthesis on native or reconstituted 70S ribosomes in vitro. Probably functions indirectly by altering the affinity of the ribosome for aminoacyl-tRNA, thus increasing their reactivity as acceptors for peptidyl transferase. The sequence is that of Elongation factor P from Wolbachia pipientis wMel.